Consider the following 372-residue polypeptide: Glutamate 5-kinase (372 aa).

Lysine 14 serves as a coordination point for ATP. The substrate site is built by serine 54, aspartate 141, and asparagine 153. An ATP-binding site is contributed by 173–174; sequence TD. The 79-residue stretch at 280 to 358 folds into the PUA domain; sequence RGHVVIDAGA…GEIETVLGYM (79 aa).

Belongs to the glutamate 5-kinase family.

It localises to the cytoplasm. It carries out the reaction L-glutamate + ATP = L-glutamyl 5-phosphate + ADP. Its pathway is amino-acid biosynthesis; L-proline biosynthesis; L-glutamate 5-semialdehyde from L-glutamate: step 1/2. In terms of biological role, catalyzes the transfer of a phosphate group to glutamate to form L-glutamate 5-phosphate. The polypeptide is Glutamate 5-kinase (Burkholderia vietnamiensis (strain G4 / LMG 22486) (Burkholderia cepacia (strain R1808))).